Here is a 262-residue protein sequence, read N- to C-terminus: MNKFLIIDGLNLVRRIYAAIPNENDMESLKERVTSACTKLLRVHHPSHIAIVWDGDEISWRKQLYPDYKKGRKPMPEPLAQGLRALQEHLATLNIASIYAAAEADDVIATLAVKTAKAQGEAIIVSTDKGFSQLNHPRITQWDHFNQQYLDIAALEQKLGVDRSQFLDLMALAGDSGNKIPGIAGIGPKSAAELLKTFRTLSTLFSSLPNLGAKQAKKLAEGKEMARLSYKLAQLQTDLPLNINLKDFRANSTPHPAPNIEQ.

Aspartate 105 is a Mg(2+) binding site. The region spanning 164–251 (SQFLDLMALA…NINLKDFRAN (88 aa)) is the 5'-3' exonuclease domain. Leucine 172, alanine 173, proline 181, isoleucine 183, and isoleucine 186 together coordinate K(+). The tract at residues 185-190 (GIGPKS) is interaction with DNA.

It belongs to the Xni family. It depends on Mg(2+) as a cofactor. K(+) is required as a cofactor.

Its function is as follows. Has flap endonuclease activity. During DNA replication, flap endonucleases cleave the 5'-overhanging flap structure that is generated by displacement synthesis when DNA polymerase encounters the 5'-end of a downstream Okazaki fragment. The protein is Flap endonuclease Xni of Shewanella sp. (strain W3-18-1).